A 961-amino-acid polypeptide reads, in one-letter code: Leucine-rich repeat-containing protein egg-6 (961 aa).

Residues 1 to 18 (MRWLTLIAVAHLIAFLSS) form the signal peptide. Over 19-854 (AEITCPRIPE…EQNERHRNIR (836 aa)) the chain is Extracellular. LRR repeat units follow at residues 60-78 (IDEL…SLPF), 79-101 (NGLR…AWRH), 103-124 (EATI…VFGN), 125-148 (LSTL…AFNG), 150-172 (SALT…SLDA), 174-197 (KASL…ILRN), 199-222 (ANLM…LMNL), 223-245 (PFLR…AFMN), 247-269 (PQLQ…RLQG), 270-294 (FKNL…DLPN), 305-316 (ITKIETLAFSNN), 317-339 (PNLQ…SFES), 340-363 (LDKL…MFDG), 364-387 (MKNL…SFAQ), 388-411 (LAHL…TFDK), 413-435 (SKLF…VFKK), and 437-455 (ISNI…SFNE). A helical transmembrane segment spans residues 855–875 (IITAIALAFVGAVTVVVIIFF). Residues 876-961 (VNYTKKQRRL…PQAVSHRSRH (86 aa)) lie on the Cytoplasmic side of the membrane. The disordered stretch occupies residues 890-943 (VYRSSPSSSGSSGQNAANESGRSSAAPSPIRPPLMNIPKTPNNRTMESTFGQPQ). Residues 893–902 (SSPSSSGSSG) are compositionally biased toward low complexity. A compositionally biased stretch (polar residues) spans 928 to 943 (KTPNNRTMESTFGQPQ).

In L1 larvae, expressed in a subset of epithelial cells including epidermal, vulval and rectal cells and the excretory duct and pore. Also detected in some neurons. Absent from internal epithelia such as the gut and pharyngeal tubes.

The protein localises to the apical cell membrane. Its function is as follows. Required for apical extracellular matrix organization and epithelial junction maintenance. This chain is Leucine-rich repeat-containing protein egg-6, found in Caenorhabditis elegans.